The primary structure comprises 448 residues: Beta-glucosidase B (448 aa).

Glutamate 167 (proton donor) is an active-site residue. Glutamate 356 functions as the Nucleophile in the catalytic mechanism.

This sequence belongs to the glycosyl hydrolase 1 family.

The catalysed reaction is Hydrolysis of terminal, non-reducing beta-D-glucosyl residues with release of beta-D-glucose.. This Paenibacillus polymyxa (Bacillus polymyxa) protein is Beta-glucosidase B (bglB).